We begin with the raw amino-acid sequence, 375 residues long: uncharacterized protein (375 aa).

Residues 54–78 form a disordered region; sequence EGIPPPTQSQEPLKPQENISRPIHH.

This is an uncharacterized protein from Bos taurus (Bovine).